The following is a 695-amino-acid chain: Polyribonucleotide nucleotidyltransferase (695 aa).

Asp-488 and Asp-494 together coordinate Mg(2+). The region spanning 554 to 613 (PKTTIIKIKTDKIRDLIGRGGETIKGIISTSCASIDVDDSGNVNIFSNNQKSFDTAVQMV) is the KH domain. The S1 motif domain maps to 623–690 (NKVYTGKVVK…DRGRIKLSRK (68 aa)).

This sequence belongs to the polyribonucleotide nucleotidyltransferase family. In terms of assembly, component of the RNA degradosome, which is a multiprotein complex involved in RNA processing and mRNA degradation. The cofactor is Mg(2+).

Its subcellular location is the cytoplasm. The enzyme catalyses RNA(n+1) + phosphate = RNA(n) + a ribonucleoside 5'-diphosphate. Functionally, involved in mRNA degradation. Catalyzes the phosphorolysis of single-stranded polyribonucleotides processively in the 3'- to 5'-direction. This is Polyribonucleotide nucleotidyltransferase from Vesicomyosocius okutanii subsp. Calyptogena okutanii (strain HA).